Consider the following 88-residue polypeptide: Arminin 7965 (88 aa).

Residues 1–18 (MKTVFAILFLTFIAFTYA) form the signal peptide. Residues 19–57 (KSYEDVKEEIKNEVEREIFEDLEEESDVLDSNVRELNDA) constitute a propeptide that is removed on maturation. Ala85 is subject to Alanine amide.

The protein belongs to the arminin family. Expressed in entodermal epithelium along the body column.

The protein resides in the secreted. It localises to the target cell membrane. In terms of biological role, antimicrobial peptide with a broad-spectrum antimicrobial activity. Keeps its antibacterial activity under a wide range of salt concentrations that mimic physiological conditions of human blood, which is surprising, since Hydra is an obligate freshwater animal with nearly no salt tolerance. Does not affect red blood cells. This chain is Arminin 7965, found in Hydra vulgaris (Hydra).